The following is a 434-amino-acid chain: Tol-Pal system protein TolB (434 aa).

Residues 1–21 (MTVRRALALAALALAVSPALA) form the signal peptide. Positions 411-434 (GDRQTPVTSGKTDLAAPAWGPLAP) are disordered.

The protein belongs to the TolB family. In terms of assembly, the Tol-Pal system is composed of five core proteins: the inner membrane proteins TolA, TolQ and TolR, the periplasmic protein TolB and the outer membrane protein Pal. They form a network linking the inner and outer membranes and the peptidoglycan layer.

Its subcellular location is the periplasm. Part of the Tol-Pal system, which plays a role in outer membrane invagination during cell division and is important for maintaining outer membrane integrity. This Anaeromyxobacter dehalogenans (strain 2CP-1 / ATCC BAA-258) protein is Tol-Pal system protein TolB.